Consider the following 258-residue polypeptide: UPF0246 protein YaaA (258 aa).

It belongs to the UPF0246 family.

This is UPF0246 protein YaaA from Shigella dysenteriae serotype 1 (strain Sd197).